A 223-amino-acid polypeptide reads, in one-letter code: Flagellar L-ring protein 2 (223 aa).

An N-terminal signal peptide occupies residues 1–17; that stretch reads MKWLSKSWAVAVVLLVG. Cys-18 carries N-palmitoyl cysteine lipidation. A lipid anchor (S-diacylglycerol cysteine) is attached at Cys-18.

This sequence belongs to the FlgH family. The basal body constitutes a major portion of the flagellar organelle and consists of four rings (L,P,S, and M) mounted on a central rod.

It is found in the cell outer membrane. It localises to the bacterial flagellum basal body. Its function is as follows. Assembles around the rod to form the L-ring and probably protects the motor/basal body from shearing forces during rotation. The protein is Flagellar L-ring protein 2 of Vibrio parahaemolyticus serotype O3:K6 (strain RIMD 2210633).